A 195-amino-acid chain; its full sequence is MKRFARKETIYLRGEEARTLYRLEEGLVRVVELLPDGRLITLRHVLPGDYFGEEALEGKAYRYTAEAMTEAVVQGLDPRAMDHEALHRVARNLARQMRRVQAYEAHLQTGELRARIARYLLFLADTPLSARDRQGIYVTVSHEEIADATASIRESVSKVLADLRREGLIATAYRRVYLLDLAALEREAGSALEAA.

Positions G110–A182 constitute an HTH crp-type domain. A DNA-binding region (H-T-H motif) is located at residues H142–A161.

In terms of biological role, activates transcription. Positively regulates PcrtB promoter upstream of the crtB operon in a cAMP-independent manner. Regulated genes include genes encoding DNA photolyase, phytoene synthase and cytochrome P450 monooxygenase, which are involved in carotenoid biosynthesis. Positively regulates the light-inducible gene cluster in the megaplasmid in a cAMP-independent manner. The protein is Transcriptional regulator LdrP of Thermus thermophilus (strain ATCC BAA-163 / DSM 7039 / HB27).